A 340-amino-acid chain; its full sequence is MGVCCPFLQPWDRARDQCLLNLPCLSDPVRRSSLLLKLALVALHLVFIGFLFLFDAEFIEKTKRDPWYMGCYILLFSATLLQYFVTSGSSPGYVVDAMRDVCEASAMYRNPSTTSIQHASRKSESVVVNVEGGSASCPRRPPTPWGKLVLDLYPPGTSIRNLTCGYCHVEQPPRTKHCHDCDRCVLQFDHHCVWLGTCIGQKNHSKFWWYICEETTLCIWTLIMYVDYLSNVAKPWWKNAIIILLLVILAISLIFVLLLLIFHSYLILTNQSTYELVRRRRIPYMRNIPGRVHPFSRGIRRNLYNVCCGNYNLDSLPTAFELEDRSRPYTCIDMLKCRCC.

2 helical membrane passes run 34–54 (LLLK…LFLF) and 66–86 (PWYM…YFVT). The DHHC domain occupies 162-212 (LTCGYCHVEQPPRTKHCHDCDRCVLQFDHHCVWLGTCIGQKNHSKFWWYIC). Cys-192 acts as the S-palmitoyl cysteine intermediate in catalysis. 2 helical membrane-spanning segments follow: residues 207–227 (FWWY…MYVD) and 241–261 (IIIL…LLLI).

It belongs to the DHHC palmitoyltransferase family. In terms of tissue distribution, expressed in mature embryos, embryo sacs, cotyledons, whole seedlings, hydathodes, guard cells, sites of lateral root initiation, root tips and phloem, but not in xylem.

The protein localises to the vacuole membrane. The enzyme catalyses L-cysteinyl-[protein] + hexadecanoyl-CoA = S-hexadecanoyl-L-cysteinyl-[protein] + CoA. Functionally, S-acyltransferase involved in protein lipid modification. Catalyzes the palmitoylation of proteins peripheral or integral to the tonoplast. Required for the tonoplast localization of CBL2, CBL3 and CBL6, but not for the plasma membrane localization of CBL9, for the endosome localization of RABF1 or for the endomembrane localization of RABF2B. The sequence is that of Protein S-acyltransferase 10 (PAT10) from Arabidopsis thaliana (Mouse-ear cress).